The following is a 138-amino-acid chain: uncharacterized protein (138 aa).

Residues 19-40 (ECKVSVISFFLLAFLLMAHIWL) traverse the membrane as a helical segment. 3 repeat units span residues 94 to 106 (KGEIEGKEEKKEG), 107 to 119 (KGEIEGKEEKKEG), and 120 to 132 (KGEIEGKEEKKEV). The segment at 94–132 (KGEIEGKEEKKEGKGEIEGKEEKKEGKGEIEGKEEKKEV) is 3 X 13 AA tandem repeats of K-G-E-I-E-G-K-E-E-K-K-E-[GV]. The tract at residues 98–138 (EGKEEKKEGKGEIEGKEEKKEGKGEIEGKEEKKEVENGPRK) is disordered.

In terms of tissue distribution, expressed in roots, leaves and flowers.

The protein resides in the mitochondrion membrane. In terms of biological role, involved in cytoplasmic male sterility (CMS) by leading to pollen abortion. Not expressed in fertile (normal) plants. This is an uncharacterized protein from Raphanus sativus (Radish).